The chain runs to 941 residues: Myosin heavy chain kinase D (941 aa).

Residues 8 to 48 (KLSKKIEKILEKNDYLKKKVEQLTKSVDNHEFKIQELLLLL) are a coiled coil. Low complexity-rich tracts occupy residues 57-70 (TTTT…NNST), 84-115 (TSTD…TTTS), and 124-206 (NSNN…PQLS). 2 disordered regions span residues 57 to 234 (TTTT…KEDS) and 276 to 310 (SSNN…QQQQ). The stretch at 289–317 (SILNDQQNQQQNQQQQNQQQQQEEINFIT) forms a coiled coil. The region spanning 337–582 (EYSANDDEWT…ICLQFGLPPI (246 aa)) is the Alpha-type protein kinase domain. WD repeat units follow at residues 635–674 (GHDE…DLSK), 683–720 (AHRR…TTTT), 741–780 (DHTA…CIKS), 783–820 (AHGK…CVYG), 824–861 (AHDA…PTTT), 864–902 (QHNM…EPIK), and 909–941 (AHRS…WKNK).

Belongs to the protein kinase superfamily. Alpha-type protein kinase family. ALPK subfamily.

The enzyme catalyses L-threonyl-[myosin heavy-chain] + ATP = O-phospho-L-threonyl-[myosin heavy-chain] + ADP + H(+). Functionally, phosphorylates threonine. Not critical for regulating the assembly and disassembly of myosin II filament. This Dictyostelium discoideum (Social amoeba) protein is Myosin heavy chain kinase D (mhkD).